We begin with the raw amino-acid sequence, 685 residues long: T-box transcription factor TBX2 (685 aa).

The segment at residues 104 to 277 (LWDQFHKLGT…NNPFAKGFRD (174 aa)) is a DNA-binding region (T-box). Disordered regions lie at residues 270–433 (PFAK…CGSL) and 606–660 (NLLT…SINE). Basic and acidic residues-rich tracts occupy residues 296-308 (MYEE…RDGA), 340-361 (SNRE…EVRT), 378-403 (RLED…KDGG), and 410-428 (SLEK…KSDP). Residues 606 to 617 (NLLTTGLSASLN) show a composition bias toward polar residues. A compositionally biased stretch (low complexity) spans 618–633 (PGSESSKPGSSRESSP). The stretch at 652–676 (ASMKDSINELQNIQRLVSGLESQRE) forms a coiled coil.

In terms of assembly, binds DNA as a monomer.

The protein localises to the nucleus. Its function is as follows. Transcription factor which acts as a transcriptional repressor. May also function as a transcriptional activator. Binds to the palindromic T site 5'-TTCACACCTAGGTGTGAA-3' DNA sequence, or a half-site, which are present in the regulatory region of several genes. This chain is T-box transcription factor TBX2 (tbx2), found in Xenopus tropicalis (Western clawed frog).